The following is a 176-amino-acid chain: MPGCLVLVVGPSGAGKDTLLRLARAALAGDPRYVFPRRLVTRPPSADEDNDEIDEAAFAEGCAAGRFTLSWRAHGLGYALPEAVGRRVAEGHVVVCNVSRRVVAGARESGRRVSVVEITAPPEILARRIAARGRAQDGDLAARLAREGGVTADLTILNTGAADEAAARLVAHLRAC.

10 to 17 (GPSGAGKD) contributes to the ATP binding site.

The protein belongs to the ribose 1,5-bisphosphokinase family.

It carries out the reaction alpha-D-ribose 1,5-bisphosphate + ATP = 5-phospho-alpha-D-ribose 1-diphosphate + ADP. The protein operates within metabolic intermediate biosynthesis; 5-phospho-alpha-D-ribose 1-diphosphate biosynthesis; 5-phospho-alpha-D-ribose 1-diphosphate from D-ribose 5-phosphate (route II): step 3/3. Catalyzes the phosphorylation of ribose 1,5-bisphosphate to 5-phospho-D-ribosyl alpha-1-diphosphate (PRPP). The chain is Ribose 1,5-bisphosphate phosphokinase PhnN from Methylobacterium radiotolerans (strain ATCC 27329 / DSM 1819 / JCM 2831 / NBRC 15690 / NCIMB 10815 / 0-1).